Reading from the N-terminus, the 891-residue chain is Translation initiation factor IF-2 (891 aa).

Positions 50-303 are disordered; that stretch reads KKEHGSADES…TSMQHGFDKS (254 aa). 2 stretches are compositionally biased toward basic and acidic residues: residues 102–237 and 245–261; these read TLEE…KTAD and HARE…EQQP. The 170-residue stretch at 390–559 folds into the tr-type G domain; it reads GRAPVVTIMG…LLQSEVLELT (170 aa). The segment at 399 to 406 is G1; it reads GHVDHGKT. GTP is bound at residue 399-406; that stretch reads GHVDHGKT. The tract at residues 424-428 is G2; that stretch reads GITQH. The tract at residues 445-448 is G3; it reads DTPG. Residues 445 to 449 and 499 to 502 contribute to the GTP site; these read DTPGH and NKID. The interval 499–502 is G4; it reads NKID. Residues 535–537 form a G5 region; it reads SAK.

Belongs to the TRAFAC class translation factor GTPase superfamily. Classic translation factor GTPase family. IF-2 subfamily.

It localises to the cytoplasm. One of the essential components for the initiation of protein synthesis. Protects formylmethionyl-tRNA from spontaneous hydrolysis and promotes its binding to the 30S ribosomal subunits. Also involved in the hydrolysis of GTP during the formation of the 70S ribosomal complex. This chain is Translation initiation factor IF-2, found in Aliivibrio salmonicida (strain LFI1238) (Vibrio salmonicida (strain LFI1238)).